Consider the following 380-residue polypeptide: Chaperone protein DnaJ (380 aa).

Residues 5–70 form the J domain; the sequence is DYYEILGVTK…QKRAAYDRFG (66 aa). Residues 137–215 form a CR-type zinc finger; it reads GKAETIKIPT…CQGAGRVNRE (79 aa). Zn(2+) is bound by residues cysteine 150, cysteine 153, cysteine 167, cysteine 170, cysteine 189, cysteine 192, cysteine 203, and cysteine 206. CXXCXGXG motif repeat units lie at residues 150 to 157, 167 to 174, 189 to 196, and 203 to 210; these read CEVCDGSG, CPTCAGYG, CPNCHGRG, and CTACQGAG.

Belongs to the DnaJ family. As to quaternary structure, homodimer. Zn(2+) serves as cofactor.

The protein localises to the cytoplasm. Functionally, participates actively in the response to hyperosmotic and heat shock by preventing the aggregation of stress-denatured proteins and by disaggregating proteins, also in an autonomous, DnaK-independent fashion. Unfolded proteins bind initially to DnaJ; upon interaction with the DnaJ-bound protein, DnaK hydrolyzes its bound ATP, resulting in the formation of a stable complex. GrpE releases ADP from DnaK; ATP binding to DnaK triggers the release of the substrate protein, thus completing the reaction cycle. Several rounds of ATP-dependent interactions between DnaJ, DnaK and GrpE are required for fully efficient folding. Also involved, together with DnaK and GrpE, in the DNA replication of plasmids through activation of initiation proteins. The sequence is that of Chaperone protein DnaJ from Methylobacterium radiotolerans (strain ATCC 27329 / DSM 1819 / JCM 2831 / NBRC 15690 / NCIMB 10815 / 0-1).